Consider the following 856-residue polypeptide: DNA endonuclease RBBP8 (856 aa).

Residues 25 to 48 (ELWSKLKECHDKDLQELLMKIGKL) form an essential for binding to the MRN complex and for RPA focus formation on DNA damage region. Coiled coils occupy residues 38 to 87 (LQEL…EDRL) and 120 to 141 (ITEL…SEQL). Disordered stretches follow at residues 143–174 (DMQK…DSPL) and 423–456 (DSEQ…DKEN). Residues 156 to 168 (ENPADTGDGEDGV) show a composition bias toward acidic residues. The damage-recruitment motif stretch occupies residues 493–515 (SSSRTKLTISLVPEKPDTKTILH). The interval 695 to 732 (SPSQSISCKERSDIPSIENKKITSEKEHESKGEPYQKQ) is disordered. A compositionally biased stretch (basic and acidic residues) spans 702–730 (CKERSDIPSIENKKITSEKEHESKGEPYQ). Thr-806 carries the post-translational modification Phosphothreonine. At Thr-818 the chain carries Phosphothreonine; by ATR.

It belongs to the COM1/SAE2/CtIP family. Homotetramer; formed by antiparallel association of helical extensions protruding from the N-termini of two parallel coiled-coil dimers. Interacts with the MRN complex; the interaction links DNA sensing to resection. Interacts with samhd1. Phosphorylation at Thr-818 by atr promotes recruitment to double-strand breaks (DSBs).

It localises to the nucleus. The protein resides in the chromosome. Its function is as follows. Endonuclease that cooperates with the MRE11-RAD50-NBN (MRN) complex in DNA-end resection, the first step of double-strand break (DSB) repair through the homologous recombination (HR) pathway. Functions downstream of the MRN complex and ATM, promotes ATR activation and its recruitment to DSBs in the S/G2 phase facilitating the generation of ssDNA. Specifically promotes the endonuclease activity of the MRN complex to clear DNA ends containing protein adducts: recruited to DSBs by nbn following phosphorylation, and promotes the endonuclease of mre11 to clear protein-DNA adducts and generate clean double-strand break ends. The MRN complex and rbbp8/CtIP are also required for chromosome alignment during metaphase. The polypeptide is DNA endonuclease RBBP8 (rbbp8) (Xenopus laevis (African clawed frog)).